Reading from the N-terminus, the 136-residue chain is Large ribosomal subunit protein uL14 (136 aa).

The protein belongs to the universal ribosomal protein uL14 family.

This Dictyostelium discoideum (Social amoeba) protein is Large ribosomal subunit protein uL14 (rpl23).